The primary structure comprises 1562 residues: Cell surface antigen I/II (1562 aa).

Positions 1-38 (MKVKKTYGFRKSKISKTLCGAVLGTVAAVSVAGQKVFA) are cleaved as a signal peptide. Residues 42-54 (TTTSDVDTKVVGT) show a composition bias toward low complexity. The tract at residues 42-91 (TTTSDVDTKVVGTQTGNPATNLPEAQGSASKEAEQSQNQAGETNGSIPVE) is disordered. The tract at residues 60–551 (ATNLPEAQGS…SKAKYDQKIL (492 aa)) is helical. Positions 76-87 (QSQNQAGETNGS) are enriched in polar residues. Ag I/II A repeat units lie at residues 147–221 (KKTT…QKTN), 222–303 (AANQ…QEAN), 304–385 (AANE…KKAN), and 386–467 (AANE…QKDL). Disordered stretches follow at residues 824–973 (VPKV…PTDP) and 1482–1509 (SNTV…RTST). Residues 943–958 (PTPPTPTPDQPEPNKP) show a composition bias toward pro residues. Residues 1500–1509 (QDPSSPRTST) are compositionally biased toward low complexity. The LPXTG sorting signal signature appears at 1529–1533 (LPNTG). Thr1532 is modified (pentaglycyl murein peptidoglycan amidated threonine). The propeptide at 1533–1562 (GVTNNAYMPLLGIIGLVTSFSLLGLKAKKD) is removed by sortase.

The protein belongs to the antigen I/II family. Post-translationally, detected as a 185 kDa cell surface protein, but also as 2 proteins in S.mutans culture supernatants of about 150 kDa (antigen I) and 50 kDa (antigen II); antigen II is only seen after proteolysis. Antigen I and II have the same N-terminus but different C-termini.

The protein localises to the secreted. The protein resides in the cell wall. Functionally, surface protein antigen implicated in dental caries. This is Cell surface antigen I/II from Streptococcus mutans serotype c (strain ATCC 700610 / UA159).